The following is a 284-amino-acid chain: 16S rRNA (guanine(1405)-N(7))-methyltransferase (284 aa).

S-adenosyl-L-methionine-binding positions include tyrosine 73, 111 to 113 (HAS), arginine 117, alanine 142, aspartate 165, 191 to 192 (DL), leucine 208, and glutamine 217.

This sequence belongs to the methyltransferase superfamily. Aminoglycoside resistance family.

It catalyses the reaction guanosine(1405) in 16S rRNA + S-adenosyl-L-methionine = N(7)-methylguanosine(1405) in 16S rRNA + S-adenosyl-L-homocysteine. Functionally, specifically methylates the N(7) position of guanine 1405 in 16S rRNA. Confers resistance to various aminoglycosides, including gentamicin and kanamycin. In Frankia casuarinae (strain DSM 45818 / CECT 9043 / HFP020203 / CcI3), this protein is 16S rRNA (guanine(1405)-N(7))-methyltransferase (Krm).